Consider the following 210-residue polypeptide: Dephospho-CoA kinase (210 aa).

The DPCK domain occupies 4–202 (WVGLTGGIGS…AFYSGIFASK (199 aa)). Residue 12-17 (GSGKSA) coordinates ATP.

This sequence belongs to the CoaE family.

It localises to the cytoplasm. It catalyses the reaction 3'-dephospho-CoA + ATP = ADP + CoA + H(+). Its pathway is cofactor biosynthesis; coenzyme A biosynthesis; CoA from (R)-pantothenate: step 5/5. In terms of biological role, catalyzes the phosphorylation of the 3'-hydroxyl group of dephosphocoenzyme A to form coenzyme A. The chain is Dephospho-CoA kinase from Neisseria gonorrhoeae.